Consider the following 629-residue polypeptide: tRNA uridine 5-carboxymethylaminomethyl modification enzyme MnmG (629 aa).

FAD-binding positions include 14-19 (GAGHAG), Val126, and Ser181. 273-287 (GPRYCPSIEDKVVRF) lines the NAD(+) pocket. Gln370 contributes to the FAD binding site.

The protein belongs to the MnmG family. Homodimer. Heterotetramer of two MnmE and two MnmG subunits. It depends on FAD as a cofactor.

Its subcellular location is the cytoplasm. NAD-binding protein involved in the addition of a carboxymethylaminomethyl (cmnm) group at the wobble position (U34) of certain tRNAs, forming tRNA-cmnm(5)s(2)U34. This chain is tRNA uridine 5-carboxymethylaminomethyl modification enzyme MnmG, found in Bacillus thuringiensis (strain Al Hakam).